Reading from the N-terminus, the 98-residue chain is Aspartyl/glutamyl-tRNA(Asn/Gln) amidotransferase subunit C (98 aa).

The disordered stretch occupies residues 76–98; it reads QVLSGAPDAEDGRFKVPAILEED.

Belongs to the GatC family. Heterotrimer of A, B and C subunits.

It catalyses the reaction L-glutamyl-tRNA(Gln) + L-glutamine + ATP + H2O = L-glutaminyl-tRNA(Gln) + L-glutamate + ADP + phosphate + H(+). The enzyme catalyses L-aspartyl-tRNA(Asn) + L-glutamine + ATP + H2O = L-asparaginyl-tRNA(Asn) + L-glutamate + ADP + phosphate + 2 H(+). In terms of biological role, allows the formation of correctly charged Asn-tRNA(Asn) or Gln-tRNA(Gln) through the transamidation of misacylated Asp-tRNA(Asn) or Glu-tRNA(Gln) in organisms which lack either or both of asparaginyl-tRNA or glutaminyl-tRNA synthetases. The reaction takes place in the presence of glutamine and ATP through an activated phospho-Asp-tRNA(Asn) or phospho-Glu-tRNA(Gln). This is Aspartyl/glutamyl-tRNA(Asn/Gln) amidotransferase subunit C from Renibacterium salmoninarum (strain ATCC 33209 / DSM 20767 / JCM 11484 / NBRC 15589 / NCIMB 2235).